The chain runs to 273 residues: Outer surface protein A (273 aa).

An N-terminal signal peptide occupies residues 1-16 (MKKYLLGIGLILALIA). A lipid anchor (N-palmitoyl cysteine) is attached at cysteine 17. Residue cysteine 17 is the site of S-diacylglycerol cysteine attachment.

This sequence belongs to the OspA lipoprotein family.

It is found in the cell outer membrane. The protein resides in the cell surface. The protein is Outer surface protein A of Borreliella burgdorferi (Lyme disease spirochete).